The chain runs to 157 residues: SsrA-binding protein (157 aa).

Belongs to the SmpB family.

The protein resides in the cytoplasm. Its function is as follows. Required for rescue of stalled ribosomes mediated by trans-translation. Binds to transfer-messenger RNA (tmRNA), required for stable association of tmRNA with ribosomes. tmRNA and SmpB together mimic tRNA shape, replacing the anticodon stem-loop with SmpB. tmRNA is encoded by the ssrA gene; the 2 termini fold to resemble tRNA(Ala) and it encodes a 'tag peptide', a short internal open reading frame. During trans-translation Ala-aminoacylated tmRNA acts like a tRNA, entering the A-site of stalled ribosomes, displacing the stalled mRNA. The ribosome then switches to translate the ORF on the tmRNA; the nascent peptide is terminated with the 'tag peptide' encoded by the tmRNA and targeted for degradation. The ribosome is freed to recommence translation, which seems to be the essential function of trans-translation. The sequence is that of SsrA-binding protein from Aquifex aeolicus (strain VF5).